A 139-amino-acid chain; its full sequence is D-ribose pyranase (139 aa).

Residue histidine 20 is the Proton donor of the active site. Substrate is bound by residues aspartate 28, histidine 106, and 128–130; that span reads YAN.

This sequence belongs to the RbsD / FucU family. RbsD subfamily. As to quaternary structure, homodecamer.

Its subcellular location is the cytoplasm. The enzyme catalyses beta-D-ribopyranose = beta-D-ribofuranose. It participates in carbohydrate metabolism; D-ribose degradation; D-ribose 5-phosphate from beta-D-ribopyranose: step 1/2. Catalyzes the interconversion of beta-pyran and beta-furan forms of D-ribose. The polypeptide is D-ribose pyranase (Escherichia coli (strain 55989 / EAEC)).